Reading from the N-terminus, the 723-residue chain is Fatty acid oxidation complex subunit alpha (723 aa).

The segment at 1 to 189 (MIYQADTLQV…KIGLLDAVVE (189 aa)) is enoyl-CoA hydratase/isomerase. Residue D296 coordinates substrate. The tract at residues 311-723 (SKDTERAAVL…FYGAQQQGSI (413 aa)) is 3-hydroxyacyl-CoA dehydrogenase. Residues M325, D344, 401 to 403 (VVE), K408, and S430 each bind NAD(+). The For 3-hydroxyacyl-CoA dehydrogenase activity role is filled by H451. N454 is an NAD(+) binding site. 2 residues coordinate substrate: N501 and Y661.

It in the N-terminal section; belongs to the enoyl-CoA hydratase/isomerase family. This sequence in the C-terminal section; belongs to the 3-hydroxyacyl-CoA dehydrogenase family. In terms of assembly, heterotetramer of two alpha chains (FadB) and two beta chains (FadA).

The enzyme catalyses a (3S)-3-hydroxyacyl-CoA + NAD(+) = a 3-oxoacyl-CoA + NADH + H(+). It carries out the reaction a (3S)-3-hydroxyacyl-CoA = a (2E)-enoyl-CoA + H2O. The catalysed reaction is a 4-saturated-(3S)-3-hydroxyacyl-CoA = a (3E)-enoyl-CoA + H2O. It catalyses the reaction (3S)-3-hydroxybutanoyl-CoA = (3R)-3-hydroxybutanoyl-CoA. The enzyme catalyses a (3Z)-enoyl-CoA = a 4-saturated (2E)-enoyl-CoA. It carries out the reaction a (3E)-enoyl-CoA = a 4-saturated (2E)-enoyl-CoA. It participates in lipid metabolism; fatty acid beta-oxidation. Involved in the aerobic and anaerobic degradation of long-chain fatty acids via beta-oxidation cycle. Catalyzes the formation of 3-oxoacyl-CoA from enoyl-CoA via L-3-hydroxyacyl-CoA. It can also use D-3-hydroxyacyl-CoA and cis-3-enoyl-CoA as substrate. The chain is Fatty acid oxidation complex subunit alpha from Vibrio parahaemolyticus serotype O3:K6 (strain RIMD 2210633).